The chain runs to 195 residues: Protein GrpE (195 aa).

Basic and acidic residues predominate over residues 1–14 (MQEPHDQEPIEKQK). A disordered region spans residues 1–45 (MQEPHDQEPIEKQKLPGMDDVLETEHSGTVAGNTERAGEDAAPSL).

The protein belongs to the GrpE family. As to quaternary structure, homodimer.

Its subcellular location is the cytoplasm. In terms of biological role, participates actively in the response to hyperosmotic and heat shock by preventing the aggregation of stress-denatured proteins, in association with DnaK and GrpE. It is the nucleotide exchange factor for DnaK and may function as a thermosensor. Unfolded proteins bind initially to DnaJ; upon interaction with the DnaJ-bound protein, DnaK hydrolyzes its bound ATP, resulting in the formation of a stable complex. GrpE releases ADP from DnaK; ATP binding to DnaK triggers the release of the substrate protein, thus completing the reaction cycle. Several rounds of ATP-dependent interactions between DnaJ, DnaK and GrpE are required for fully efficient folding. In Nitrosomonas europaea (strain ATCC 19718 / CIP 103999 / KCTC 2705 / NBRC 14298), this protein is Protein GrpE.